A 223-amino-acid polypeptide reads, in one-letter code: GTP cyclohydrolase 1 (223 aa).

Cysteine 114, histidine 117, and cysteine 185 together coordinate Zn(2+).

This sequence belongs to the GTP cyclohydrolase I family. In terms of assembly, homomer.

The catalysed reaction is GTP + H2O = 7,8-dihydroneopterin 3'-triphosphate + formate + H(+). It participates in cofactor biosynthesis; 7,8-dihydroneopterin triphosphate biosynthesis; 7,8-dihydroneopterin triphosphate from GTP: step 1/1. In Chlorobium chlorochromatii (strain CaD3), this protein is GTP cyclohydrolase 1.